Here is a 130-residue protein sequence, read N- to C-terminus: Small ribosomal subunit protein uS8 (130 aa).

The protein belongs to the universal ribosomal protein uS8 family. As to quaternary structure, part of the 30S ribosomal subunit. Contacts proteins S5 and S12.

One of the primary rRNA binding proteins, it binds directly to 16S rRNA central domain where it helps coordinate assembly of the platform of the 30S subunit. This chain is Small ribosomal subunit protein uS8, found in Shewanella sediminis (strain HAW-EB3).